A 585-amino-acid polypeptide reads, in one-letter code: Arginine--tRNA ligase (585 aa).

Positions 131–141 match the 'HIGH' region motif; sequence ANPTGPMHVGH.

It belongs to the class-I aminoacyl-tRNA synthetase family. Monomer.

The protein localises to the cytoplasm. It catalyses the reaction tRNA(Arg) + L-arginine + ATP = L-arginyl-tRNA(Arg) + AMP + diphosphate. The protein is Arginine--tRNA ligase of Chelativorans sp. (strain BNC1).